We begin with the raw amino-acid sequence, 114 residues long: Adapter SH3BGRL (114 aa).

A required for interaction with HER2 region spans residues 13 to 50; sequence STAIKKKQQDVLGFLEANKIGFEEKDIAANEENRKWMR. The interval 54 to 71 is required for interaction with PFN1, HER2, and ATG12; it reads PENSRPATGYPLPPQIFN. Residues 61–67 carry the SH3-binding motif; sequence TGYPLPP.

The protein belongs to the SH3BGR family. In terms of assembly, monomer. Interacts with PFN1/Profilin-1. Interacts with ERBB2. Interacts with ATG12. Interacts with BECN1. Interacts with translating ribosomes. Ubiquitous.

The protein localises to the cytoplasm. Its subcellular location is the cytosol. It localises to the cell membrane. Its function is as follows. Appears to function as an adapter protein that bridges proteins together or proteins with mRNAs. May function as a ubiquitin ligase-substrate adapter. Additionally, associates with translating cytoplasmic ribosomes and may promote the expression of specific mRNAs. The chain is Adapter SH3BGRL from Homo sapiens (Human).